Consider the following 1779-residue polypeptide: Fibronectin type III domain-containing protein 1 (1779 aa).

An N-terminal signal peptide occupies residues 1-29; sequence MAPEARASPRLLLRAALLLLAALLPVASS. 4 consecutive Fibronectin type-III domains span residues 33-126, 103-203, 207-302, and 307-402; these read PVDH…KAPR, PNKP…AEED, VPED…TPES, and APEN…IPTT. Residues 400 to 413 show a composition bias toward polar residues; it reads PTTSSTEASVQPNG. Disordered regions lie at residues 400–442, 459–1108, 1120–1227, and 1330–1401; these read PTTS…MPPA, NGVA…RNLD, EENT…KPNG, and PTTT…PPGT. Residues 423–437 show a composition bias toward low complexity; it reads QQPSSSAPKVAASSQ. Residues 493–506 are compositionally biased toward polar residues; sequence NPRSSRLETLNQKQ. Basic and acidic residues predominate over residues 534–554; that stretch reads SRKEGMDRRGPSLDPHPHPRV. Polar residues-rich tracts occupy residues 557–570 and 590–607; these read SASSAYHQLSSTDN and SSGSSPKNPGRSRPTSAP. The segment covering 629–640 has biased composition (low complexity); that stretch reads ASSSTSRQSHSS. At serine 651 the chain carries Phosphoserine. A compositionally biased stretch (low complexity) spans 676-694; the sequence is HASSSHTTSRTASSSHPSA. Serine 699 bears the Phosphoserine mark. The span at 707 to 720 shows a compositional bias: basic and acidic residues; sequence DSDRAAEDTIRRAE. 2 stretches are compositionally biased toward polar residues: residues 763-784 and 861-875; these read PSVSPQSTSASKVLTRSPSLPA and PLSSKAQGFQQSTTD. Residues 879–904 show a composition bias toward low complexity; it reads PQTSPASTSRQPSPARPPASRSQPSP. 2 stretches are compositionally biased toward polar residues: residues 957 to 971 and 1003 to 1020; these read APQNQNEGAQSTYED and VGSQSWSSDNRPQPSQAG. The span at 1085–1097 shows a compositional bias: low complexity; the sequence is LSTSVKKWPSSSS. A compositionally biased stretch (basic and acidic residues) spans 1098 to 1108; sequence PRDKYADRNLD. Polar residues-rich tracts occupy residues 1147-1159 and 1166-1177; these read NPATASPIANTHS and RAPSSYSSTTPM. The segment covering 1330–1389 has biased composition (low complexity); that stretch reads PTTTMPPSTTTTTVPPTTTLPPTTTTTRRTTTTRRTTTTRRPTTTTRATRRTTTTTTTPE. Residues 1543–1637 enclose the Fibronectin type-III 5 domain; the sequence is APRNITVVAM…PSVSFVTESD (95 aa). A glycan (N-linked (GlcNAc...) asparagine) is linked at asparagine 1546.

It is found in the secreted. Its function is as follows. May be an activator of G protein signaling. This Rattus norvegicus (Rat) protein is Fibronectin type III domain-containing protein 1 (Fndc1).